We begin with the raw amino-acid sequence, 159 residues long: Transcription elongation factor GreA (159 aa).

This sequence belongs to the GreA/GreB family.

Its function is as follows. Necessary for efficient RNA polymerase transcription elongation past template-encoded arresting sites. The arresting sites in DNA have the property of trapping a certain fraction of elongating RNA polymerases that pass through, resulting in locked ternary complexes. Cleavage of the nascent transcript by cleavage factors such as GreA or GreB allows the resumption of elongation from the new 3'terminus. GreA releases sequences of 2 to 3 nucleotides. This Buchnera aphidicola subsp. Acyrthosiphon pisum (strain APS) (Acyrthosiphon pisum symbiotic bacterium) protein is Transcription elongation factor GreA.